A 410-amino-acid polypeptide reads, in one-letter code: Neuroserpin (410 aa).

Positions 1 to 16 (MAYLGLLSLVALQSLV) are cleaved as a signal peptide. The residue at position 83 (serine 83) is a Phosphoserine. 3 N-linked (GlcNAc...) asparagine glycosylation sites follow: asparagine 157, asparagine 321, and asparagine 401. Serine 403 carries an O-linked (Xyl...) (chondroitin sulfate) serine glycan.

It belongs to the serpin family. In terms of tissue distribution, detected in adult pituitary and adrenal gland.

The protein resides in the secreted. It is found in the cytoplasmic vesicle. It localises to the secretory vesicle lumen. The protein localises to the perikaryon. Its function is as follows. Serine protease inhibitor that inhibits plasminogen activators and plasmin but not thrombin. May be involved in the formation or reorganization of synaptic connections as well as for synaptic plasticity in the adult nervous system. May protect neurons from cell damage by tissue-type plasminogen activator. This chain is Neuroserpin (Serpini1), found in Rattus norvegicus (Rat).